Consider the following 263-residue polypeptide: Large ribosomal subunit protein uL29m (263 aa).

Disordered stretches follow at residues 51–92 (ARVT…EELP) and 208–263 (PEID…APRV). Residues 53–66 (VTRDNSKQRGESAL) show a composition bias toward basic and acidic residues. Over residues 214-223 (NPENPYTPST) the composition is skewed to polar residues. The span at 233-245 (GAEASETQSTTTE) shows a compositional bias: low complexity. A compositionally biased stretch (polar residues) spans 246–257 (IDPTTIPSSKSQ).

It belongs to the universal ribosomal protein uL29 family. In terms of assembly, component of the mitochondrial large ribosomal subunit (mt-LSU). Mature N.crassa 74S mitochondrial ribosomes consist of a small (37S) and a large (54S) subunit. The 37S small subunit contains a 16S ribosomal RNA (16S mt-rRNA) and 32 different proteins. The 54S large subunit contains a 23S rRNA (23S mt-rRNA) and 42 different proteins.

The protein resides in the mitochondrion. Its function is as follows. Component of the mitochondrial ribosome (mitoribosome), a dedicated translation machinery responsible for the synthesis of mitochondrial genome-encoded proteins, including at least some of the essential transmembrane subunits of the mitochondrial respiratory chain. The mitoribosomes are attached to the mitochondrial inner membrane and translation products are cotranslationally integrated into the membrane. This chain is Large ribosomal subunit protein uL29m (mrpl4), found in Neurospora crassa (strain ATCC 24698 / 74-OR23-1A / CBS 708.71 / DSM 1257 / FGSC 987).